The sequence spans 24 residues: Brevinin-1Bc (24 aa).

Cys-18 and Cys-24 are joined by a disulfide.

As to expression, expressed by the skin glands.

The protein localises to the secreted. Its function is as follows. Antibacterial activity against Gram-positive bacterium S.aureus. The polypeptide is Brevinin-1Bc (Lithobates berlandieri (Rio Grande leopard frog)).